We begin with the raw amino-acid sequence, 140 residues long: Nucleoside diphosphate kinase (140 aa).

ATP is bound by residues Lys-11, Phe-59, Arg-87, Thr-93, Arg-104, and Asn-114. His-117 functions as the Pros-phosphohistidine intermediate in the catalytic mechanism.

Belongs to the NDK family. In terms of assembly, homotetramer. Mg(2+) is required as a cofactor.

The protein localises to the cytoplasm. It catalyses the reaction a 2'-deoxyribonucleoside 5'-diphosphate + ATP = a 2'-deoxyribonucleoside 5'-triphosphate + ADP. It carries out the reaction a ribonucleoside 5'-diphosphate + ATP = a ribonucleoside 5'-triphosphate + ADP. Its function is as follows. Major role in the synthesis of nucleoside triphosphates other than ATP. The ATP gamma phosphate is transferred to the NDP beta phosphate via a ping-pong mechanism, using a phosphorylated active-site intermediate. The chain is Nucleoside diphosphate kinase from Bartonella tribocorum (strain CIP 105476 / IBS 506).